A 213-amino-acid polypeptide reads, in one-letter code: CDP-diacylglycerol--inositol 3-phosphatidyltransferase (213 aa).

Topologically, residues 1 to 5 are cytoplasmic; the sequence is MPEEN. The helical transmembrane segment at 6 to 26 threads the bilayer; sequence IFLFVPNLIGYARIVFAIISF. Residue Tyr27 is a topological domain, lumenal. Residues 28 to 48 form a helical membrane-spanning segment; that stretch reads FMPCCPFTASSFYLLSGLLDA. 2 residues coordinate Mg(2+): Asp47 and Asp50. Residues 49-73 lie on the Cytoplasmic side of the membrane; the sequence is FDGHAARALNQGTRFGAMLDMLTDR. 3 residues coordinate a CDP-1,2-diacyl-sn-glycerol: Gly51, Arg55, and Thr61. Mg(2+) is bound by residues Asp68 and Asp72. Asp72 acts as the Proton acceptor in catalysis. A helical membrane pass occupies residues 74–94; the sequence is CATMCLLVNLALLYPRATLLF. Residue Gln95 is a topological domain, lumenal. Residues 96 to 116 form a helical membrane-spanning segment; that stretch reads LSMSLDVASHWLHLHSSVVRG. The Cytoplasmic segment spans residues 117-139; that stretch reads SESHKMIDLSGNPVLRIYYTSRP. A helical transmembrane segment spans residues 140–160; it reads ALFTLCAGNELFYCLLYLFNF. Topologically, residues 161–174 are lumenal; it reads SEGPLVGSVGLFRM. A helical membrane pass occupies residues 175 to 195; sequence GLWVTAPIALLKSVISVIHLI. At 196–213 the chain is on the cytoplasmic side; it reads TAARNMAALDAADRAKKK.

Belongs to the CDP-alcohol phosphatidyltransferase class-I family. Mn(2+) is required as a cofactor. The cofactor is Mg(2+).

The protein localises to the endoplasmic reticulum membrane. It is found in the cell membrane. The enzyme catalyses a CDP-1,2-diacyl-sn-glycerol + myo-inositol = a 1,2-diacyl-sn-glycero-3-phospho-(1D-myo-inositol) + CMP + H(+). Functionally, catalyzes the biosynthesis of phosphatidylinositol (PtdIns) as well as PtdIns:inositol exchange reaction. May thus act to reduce an excessive cellular PtdIns content. The exchange activity is due to the reverse reaction of PtdIns synthase and is dependent on CMP, which is tightly bound to the enzyme. The polypeptide is CDP-diacylglycerol--inositol 3-phosphatidyltransferase (Mus musculus (Mouse)).